The chain runs to 275 residues: ATP synthase subunit delta (275 aa).

It belongs to the ATPase delta chain family. F-type ATPases have 2 components, F(1) - the catalytic core - and F(0) - the membrane proton channel. F(1) has five subunits: alpha(3), beta(3), gamma(1), delta(1), epsilon(1). F(0) has three main subunits: a(1), b(2) and c(10-14). The alpha and beta chains form an alternating ring which encloses part of the gamma chain. F(1) is attached to F(0) by a central stalk formed by the gamma and epsilon chains, while a peripheral stalk is formed by the delta and b chains.

Its subcellular location is the cell membrane. Its function is as follows. F(1)F(0) ATP synthase produces ATP from ADP in the presence of a proton or sodium gradient. F-type ATPases consist of two structural domains, F(1) containing the extramembraneous catalytic core and F(0) containing the membrane proton channel, linked together by a central stalk and a peripheral stalk. During catalysis, ATP synthesis in the catalytic domain of F(1) is coupled via a rotary mechanism of the central stalk subunits to proton translocation. In terms of biological role, this protein is part of the stalk that links CF(0) to CF(1). It either transmits conformational changes from CF(0) to CF(1) or is implicated in proton conduction. The chain is ATP synthase subunit delta from Pseudarthrobacter chlorophenolicus (strain ATCC 700700 / DSM 12829 / CIP 107037 / JCM 12360 / KCTC 9906 / NCIMB 13794 / A6) (Arthrobacter chlorophenolicus).